The chain runs to 379 residues: tRNA(Met) cytidine acetate ligase (379 aa).

Residues 8–21 (IAEFNPFHKGHEYL), glycine 97, asparagine 153, and arginine 176 each bind ATP.

It belongs to the TmcAL family.

The protein localises to the cytoplasm. It catalyses the reaction cytidine(34) in elongator tRNA(Met) + acetate + ATP = N(4)-acetylcytidine(34) in elongator tRNA(Met) + AMP + diphosphate. Functionally, catalyzes the formation of N(4)-acetylcytidine (ac(4)C) at the wobble position of elongator tRNA(Met), using acetate and ATP as substrates. First activates an acetate ion to form acetyladenylate (Ac-AMP) and then transfers the acetyl group to tRNA to form ac(4)C34. This is tRNA(Met) cytidine acetate ligase from Lactococcus lactis subsp. cremoris (strain MG1363).